Reading from the N-terminus, the 528-residue chain is Glutamate--cysteine ligase (528 aa).

It belongs to the glutamate--cysteine ligase type 1 family. Type 1 subfamily.

The enzyme catalyses L-cysteine + L-glutamate + ATP = gamma-L-glutamyl-L-cysteine + ADP + phosphate + H(+). It functions in the pathway sulfur metabolism; glutathione biosynthesis; glutathione from L-cysteine and L-glutamate: step 1/2. This chain is Glutamate--cysteine ligase, found in Janthinobacterium sp. (strain Marseille) (Minibacterium massiliensis).